The sequence spans 414 residues: MGGASACIPLCLLLATARMARPQTPERPVFTCGGILTGESGFIGSEGFPGMYPPNSKCTWKITVPEGKVVVLNFRFIDLENDNLCRYDFVDVYNGHANGQRIGRFCGTFRPGSLVASGNKMTVQMISDANTAGSGFMATYSAAAPDGKGDRYCGGRLEKPSGTFKTPNWPDRDYPVGVTCVWHIIAPKNQLIELKFEKFDVERDNYCRYDYVAVFNGGEVNDAKRIGKYCGDSPPVPIVSERNELLIQFLSDLSLTADGFIGHYKFRPKKFPTTTTTPVTTTLPVTTGLKPTVALCQQKCRRMGTLESNYCSSNFVLAGTVITTVTRGGSLHATVSIISIYREGNLAIQQAGKNMSVKLTVVCRQCPLLRRGLNYIIMGQVGEDGRGKIMPNSFVKMFKNKNQKPMNALKNKQC.

Residues 1–22 (MGGASACIPLCLLLATARMARP) form the signal peptide. 7 disulfides stabilise this stretch: Cys32–Cys58, Cys85–Cys106, Cys153–Cys180, Cys207–Cys230, Cys296–Cys363, Cys300–Cys366, and Cys311–Cys414. 2 CUB domains span residues 32–143 (CGGI…YSAA) and 153–267 (CGGR…YKFR). In terms of domain architecture, NTR spans 296 to 414 (CQQKCRRMGT…PMNALKNKQC (119 aa)). A glycan (N-linked (GlcNAc...) asparagine) is linked at Asn354.

In terms of assembly, interacts with heparin with high affinity, and type I or II collagen. O-glycosylated; contains sialic acid.

The protein resides in the secreted. Functionally, binds to the C-terminal propeptide of types I and II procollagens and may enhance the cleavage of that propeptide by BMP1. The polypeptide is Procollagen C-endopeptidase enhancer 2 (Pcolce2) (Mus musculus (Mouse)).